Here is a 142-residue protein sequence, read N- to C-terminus: Immunity protein WapI (142 aa).

Its function is as follows. Immunity protein component of a toxin-immunity protein module, which functions as a cellular contact-dependent growth inhibition (CDI) system. Neutralizes the tRNase activity of cognate toxin WapA upon expression in E.coli. Does not inhibit WapA from other strains of B.subtilis. The WapA C-terminus cannot be expressed on its own in E.coli, however it can be cloned in the presence of its cognate immunity protein gene. Cell contact is necessary for growth inhibition. Unlike the LXG toxin-immunity modules, WapAI mediates competition under shaking culture conditions. This is Immunity protein WapI (wapI) from Bacillus subtilis (strain 168).